A 157-amino-acid polypeptide reads, in one-letter code: uncharacterized protein (157 aa).

The N-terminal stretch at M1–T30 is a signal peptide.

The protein resides in the secreted. This is an uncharacterized protein from Homo sapiens (Human).